Here is a 396-residue protein sequence, read N- to C-terminus: Elongation factor Tu (396 aa).

The tr-type G domain maps to 10–206 (KPHVNVGTIG…ALDASIPEPK (197 aa)). A G1 region spans residues 19 to 26 (GHVDHGKT). 19-26 (GHVDHGKT) is a GTP binding site. Threonine 26 serves as a coordination point for Mg(2+). The tract at residues 60–64 (GITIS) is G2. The segment at 81–84 (DCPG) is G3. Residues 81–85 (DCPGH) and 136–139 (NKAD) contribute to the GTP site. Residues 136-139 (NKAD) form a G4 region. Residues 174-176 (SAL) are G5.

Belongs to the TRAFAC class translation factor GTPase superfamily. Classic translation factor GTPase family. EF-Tu/EF-1A subfamily. As to quaternary structure, monomer.

It is found in the cytoplasm. The enzyme catalyses GTP + H2O = GDP + phosphate + H(+). Its function is as follows. GTP hydrolase that promotes the GTP-dependent binding of aminoacyl-tRNA to the A-site of ribosomes during protein biosynthesis. This chain is Elongation factor Tu, found in Dichelobacter nodosus (strain VCS1703A).